The following is a 253-amino-acid chain: Mediator of RNA polymerase II transcription subunit 19 (253 aa).

2 disordered regions span residues 18–49 and 157–253; these read EQYS…TLKT and GPLP…TQVF. Positions 21–40 are enriched in low complexity; the sequence is SPKSSPRAGGAGGRSPVVAR. Composition is skewed to basic residues over residues 165–183 and 220–233; these read HLKS…KHKY and RKKR…KKQR.

Belongs to the Mediator complex subunit 19 family. As to quaternary structure, component of the Mediator complex.

It localises to the nucleus. Functionally, component of the Mediator complex, a coactivator involved in the regulated transcription of nearly all RNA polymerase II-dependent genes. Mediator functions as a bridge to convey information from gene-specific regulatory proteins to the basal RNA polymerase II transcription machinery. Mediator is recruited to promoters by direct interactions with regulatory proteins and serves as a scaffold for the assembly of a functional preinitiation complex with RNA polymerase II and the general transcription factors. This Aedes aegypti (Yellowfever mosquito) protein is Mediator of RNA polymerase II transcription subunit 19 (MED19).